The primary structure comprises 417 residues: Paired box protein Pax-2 (417 aa).

Positions 16-142 form a DNA-binding region, paired; that stretch reads GHGGVNQLGG…SSINRIIRTK (127 aa). Residues 19–75 form a PAI subdomain region; the sequence is GVNQLGGVFVNGRPLPDVVRQRIVELAHQGVRPCDISRQLRVSHGCVSKILGRYYET. An RED subdomain region spans residues 94–142; sequence KVVDKIAEYKRQNPTMFAWEIRDRLLAEGICDNDTVPSVSSINRIIRTK. Thr-226 carries the phosphothreonine modification. The segment at 304 to 325 is disordered; that stretch reads KSSLSASTNPELGSNVSGTQTY. Polar residues predominate over residues 305-325; it reads SSLSASTNPELGSNVSGTQTY.

As to quaternary structure, interacts with ELGN3; the interaction targets PAX2 for destruction. Interacts with TLE4. Expressed in primitive cells of the kidney, ureter, eye, ear and central nervous system.

It is found in the nucleus. In terms of biological role, transcription factor that may have a role in kidney cell differentiation. Has a critical role in the development of the urogenital tract, the eyes, and the CNS. This Homo sapiens (Human) protein is Paired box protein Pax-2 (PAX2).